Consider the following 144-residue polypeptide: Histone H2B.2, sperm (144 aa).

A disordered region spans residues 1–51 (MPRSPAKTSPRKGSPRKGSPSRKASPKRGGKGAKRAGKGGRRRRVVKRRRR). 5 short sequence motifs (SPKK motif) span residues 4-7 (SPAK), 9-12 (SPRK), 14-17 (SPRK), 19-22 (SPSR), and 25-28 (SPKR). 3 positions are modified to phosphoserine: S14, S19, and S25. Positions 24–51 (ASPKRGGKGAKRAGKGGRRRRVVKRRRR) are enriched in basic residues. O-linked (GlcNAc) serine glycosylation is present at S131. K139 is covalently cross-linked (Glycyl lysine isopeptide (Lys-Gly) (interchain with G-Cter in ubiquitin)).

The protein belongs to the histone H2B family. As to quaternary structure, the nucleosome is a histone octamer containing two molecules each of H2A, H2B, H3 and H4 assembled in one H3-H4 heterotetramer and two H2A-H2B heterodimers. The octamer wraps approximately 147 bp of DNA. In terms of processing, monoubiquitination of Lys-139 gives a specific tag for epigenetic transcriptional activation and is also prerequisite for histone H3 'Lys-4' and 'Lys-79' methylation. Post-translationally, phosphorylated on SPKK motifs 3, 4 and 5; which may regulate DNA binding. Dephosphorylated during maturation of spermatids to mature sperm and rephosphorylated at fertilization.

The protein localises to the nucleus. It is found in the chromosome. Functionally, core component of nucleosome. Nucleosomes wrap and compact DNA into chromatin, limiting DNA accessibility to the cellular machineries which require DNA as a template. Histones thereby play a central role in transcription regulation, DNA repair, DNA replication and chromosomal stability. DNA accessibility is regulated via a complex set of post-translational modifications of histones, also called histone code, and nucleosome remodeling. In Parechinus angulosus (Angulate sea urchin), this protein is Histone H2B.2, sperm.